Reading from the N-terminus, the 414-residue chain is TnpB-like protein MJ1635 (414 aa).

Residues Cys-329, Cys-332, Cys-346, and Cys-349 each contribute to the Zn(2+) site.

In the N-terminal section; belongs to the transposase 2 family. This sequence in the C-terminal section; belongs to the transposase 35 family.

The sequence is that of TnpB-like protein MJ1635 from Methanocaldococcus jannaschii (strain ATCC 43067 / DSM 2661 / JAL-1 / JCM 10045 / NBRC 100440) (Methanococcus jannaschii).